The following is a 513-amino-acid chain: Galactose-1-phosphate uridylyltransferase (513 aa).

The protein belongs to the galactose-1-phosphate uridylyltransferase type 2 family.

Its subcellular location is the cytoplasm. It catalyses the reaction alpha-D-galactose 1-phosphate + UDP-alpha-D-glucose = alpha-D-glucose 1-phosphate + UDP-alpha-D-galactose. The protein operates within carbohydrate metabolism; galactose metabolism. The polypeptide is Galactose-1-phosphate uridylyltransferase (galT) (Bacillus subtilis (strain 168)).